We begin with the raw amino-acid sequence, 335 residues long: Malate dehydrogenase 1 (335 aa).

Residues G11–G16 and D35 each bind NAD(+). Residues R97 and R103 each coordinate substrate. NAD(+)-binding positions include N110 and V133–N135. Residues N135 and R166 each contribute to the substrate site. H190 serves as the catalytic Proton acceptor.

The protein belongs to the LDH/MDH superfamily. MDH type 3 family.

The catalysed reaction is (S)-malate + NAD(+) = oxaloacetate + NADH + H(+). Its function is as follows. Catalyzes the reversible oxidation of malate to oxaloacetate. The chain is Malate dehydrogenase 1 (mdh1) from Aquifex aeolicus (strain VF5).